A 398-amino-acid chain; its full sequence is Type III polyketide synthase pspB (398 aa).

CoA contacts are provided by residues lysine 47 and 47–54 (KLLQINRS). Catalysis depends on cysteine 152, which acts as the Nucleophile. Residue 214 to 215 (SD) participates in substrate binding. CoA contacts are provided by residues leucine 267, glycine 321, 321–324 (GGEA), and alanine 324.

Belongs to the thiolase-like superfamily. Chalcone/stilbene synthases family. Homodimer.

It carries out the reaction 11 malonyl-CoA + acetyl-CoA + S-adenosyl-L-methionine + 12 NADPH + 22 H(+) = soppiline B + S-adenosyl-L-homocysteine + 12 CO2 + 12 NADP(+) + 12 CoA + 8 H2O. It functions in the pathway secondary metabolite biosynthesis. Its function is as follows. Type III polyketide synthase; part of the gene cluster that mediates the biosynthesis of the alkylresorcinols called soppilines. The biosynthesis starts with the HR-PKS pspA-catalyzed carbon chain assembly through nine chain elongation cycles, using acetyl CoA and malonyl CoA as a starter and extender units, respectively, to produce the polyketide soppiline A. In the first round, the KR, DH, and CMeT domains work to produce 2-methyl-2-butenyl thioester. In rounds 2 to 5, the KR, DH, and ER domains fully catalyze the reduction of the elongated beta-ketothioester, resulting in the insertion of eight methylene units. The unusual Z,E,Z-triene motif is likely constructed during rounds 6 to 8. Typically, the DH domain introduces a double bond at an alpha,beta-position of an elongated polyketide chain, with the dehydration of a beta-hydroxy group. The last extension cycle would be carried out with L-oriented beta-ketoreduction by the KR domain to produce beta-hydroxy carboxylic acid soppiline A. The type III PKS pspB intercepts the elongated polyketide chain at round 8 from the HR-PKS pspA, followed by a tri-keto extension and decarboxylative aldol cyclization to produce 1,3,5-trisubstituted alkylresorcinol soppiline B. Subsequently, the cytochrome P450 monooxygenase pspC catalyzes three-step oxidations at the C-4 methyl group to carboxylic acid to yield soppiline C. The chain is Type III polyketide synthase pspB from Penicillium soppii.